Reading from the N-terminus, the 98-residue chain is NADH-ubiquinone oxidoreductase chain 4L (98 aa).

Helical transmembrane passes span 1–21 (MPFI…GLLI), 29–49 (SLLC…LMTL), and 61–81 (IVLL…LVLI).

This sequence belongs to the complex I subunit 4L family. Core subunit of respiratory chain NADH dehydrogenase (Complex I) which is composed of 45 different subunits.

It is found in the mitochondrion inner membrane. It carries out the reaction a ubiquinone + NADH + 5 H(+)(in) = a ubiquinol + NAD(+) + 4 H(+)(out). In terms of biological role, core subunit of the mitochondrial membrane respiratory chain NADH dehydrogenase (Complex I) which catalyzes electron transfer from NADH through the respiratory chain, using ubiquinone as an electron acceptor. Part of the enzyme membrane arm which is embedded in the lipid bilayer and involved in proton translocation. This is NADH-ubiquinone oxidoreductase chain 4L (MT-ND4L) from Aotus trivirgatus (Three-striped night monkey).